The sequence spans 683 residues: DNA polymerase alpha-associated DNA helicase A (683 aa).

229 to 236 (GPPGTGKT) contacts ATP.

Belongs to the DNA2/NAM7 helicase family. In terms of assembly, associates with the hexameric DNA polymerase alpha.

It localises to the cytoplasm. The protein resides in the nucleus. The catalysed reaction is ATP + H2O = ADP + phosphate + H(+). In terms of biological role, DNA polymerase alpha-associated DNA helicase which may be involved in DNA replication. The polypeptide is DNA polymerase alpha-associated DNA helicase A (HCS1) (Saccharomyces cerevisiae (strain ATCC 204508 / S288c) (Baker's yeast)).